Here is a 209-residue protein sequence, read N- to C-terminus: Hyperpolarization-activated voltage-gated potassium channel (209 aa).

At 1-10 (MNLKDRRLKK) the chain is on the cytoplasmic side. Residues 11 to 31 (IMEVLSLIFTFEIVASFILST) form a helical membrane-spanning segment. Topologically, residues 32–38 (YNPPYQD) are extracellular. A helical membrane pass occupies residues 39-59 (LLIKLDYISIMFFTFEFIYNF). The Cytoplasmic portion of the chain corresponds to 60–71 (YYVEDKAKFFKD). The helical transmembrane segment at 72-92 (IYNIVDAIVVIAFLLYSLQVF) threads the bilayer. Residues 93–96 (YSKA) lie on the Extracellular side of the membrane. Residues 97–117 (FLGLRVINLLRILVLLRIIKL) form a helical; Voltage-sensor membrane-spanning segment. Residues 118–125 (RKLEENQA) lie on the Cytoplasmic side of the membrane. Residues 126–146 (LINFLTLLTICFIASCLIWIV) traverse the membrane as a helical segment. Residues 147–181 (ESGVNPAINNFFDAFYFTTISITTVGYGDITPKTD) lie on the Extracellular side of the membrane. Positions 170 to 175 (TVGYGD) match the Selectivity filter motif. The helical transmembrane segment at 182-202 (AGKLIIIFSVLFFISGLITSL) threads the bilayer. Residues 203 to 209 (QKALKGD) are Cytoplasmic-facing.

Belongs to the potassium channel family. Homotetramer.

It localises to the cell membrane. In terms of biological role, voltage-gated potassium-selective channel opened by hyperpolarization. The sequence is that of Hyperpolarization-activated voltage-gated potassium channel (mvp) from Methanocaldococcus jannaschii (strain ATCC 43067 / DSM 2661 / JAL-1 / JCM 10045 / NBRC 100440) (Methanococcus jannaschii).